We begin with the raw amino-acid sequence, 148 residues long: Transthyretin-like protein 2 (148 aa).

The first 17 residues, 1–17, serve as a signal peptide directing secretion; that stretch reads MSKYAILGLVLVGTVAS. A glycan (N-linked (GlcNAc...) asparagine) is linked at N77.

Belongs to the nematode transthyretin-like family.

It localises to the secreted. The chain is Transthyretin-like protein 2 (ttr-2) from Caenorhabditis elegans.